The following is a 300-amino-acid chain: Cell adhesion molecule CEACAM19 (300 aa).

The signal sequence occupies residues 1–32 (MEIPMGTQGCFSKSLLLSASILVLWMLQGSQA). Residues 33 to 157 (ALYIQKIPEQ…PSTHLPTNAG (125 aa)) are Extracellular-facing. A glycan (N-linked (GlcNAc...) asparagine) is linked at asparagine 104. Residues 158-178 (ILAATIIGSLAAGALLISCIA) form a helical membrane-spanning segment. The Cytoplasmic portion of the chain corresponds to 179 to 300 (YLLVTRNWRG…APYCQLVPTS (122 aa)). Residues 259–291 (SINPARPLPTPPHLQAEPENHQYQQDLLNPDPA) form a disordered region.

Belongs to the immunoglobulin superfamily. CEA family. Ubiquitous with highest expression in prostate, uterus, fetal brain, mammary gland, adrenal gland, skeletal muscle, small intestine, and kidney, and lower expression in lung, cerebellum, testis, liver, pancreas, bone marrow and ovary.

The protein resides in the membrane. This Homo sapiens (Human) protein is Cell adhesion molecule CEACAM19.